A 374-amino-acid polypeptide reads, in one-letter code: UPF0754 membrane protein NWMN_1738 (374 aa).

2 consecutive transmembrane segments (helical) span residues 4 to 24 (LFIIIFMIVVGAIIGGITNVI) and 354 to 374 (SLGFILGGIIGFFQGLVAIFV).

This sequence belongs to the UPF0754 family.

Its subcellular location is the cell membrane. This is UPF0754 membrane protein NWMN_1738 from Staphylococcus aureus (strain Newman).